Here is a 355-residue protein sequence, read N- to C-terminus: Alanine racemase (355 aa).

Lys34 functions as the Proton acceptor; specific for D-alanine in the catalytic mechanism. Lys34 bears the N6-(pyridoxal phosphate)lysine mark. Arg133 is a substrate binding site. Residue Tyr249 is the Proton acceptor; specific for L-alanine of the active site. Met297 serves as a coordination point for substrate.

It belongs to the alanine racemase family. It depends on pyridoxal 5'-phosphate as a cofactor.

The catalysed reaction is L-alanine = D-alanine. It participates in amino-acid biosynthesis; D-alanine biosynthesis; D-alanine from L-alanine: step 1/1. Its function is as follows. Catalyzes the interconversion of L-alanine and D-alanine. May also act on other amino acids. This chain is Alanine racemase (alr), found in Rickettsia conorii (strain ATCC VR-613 / Malish 7).